The primary structure comprises 311 residues: MAFKHKDIIGLQDLTREEIELLLSTAENLKEINSREIKKVPTLRGKTVVNLFYEASTRTRTSFEIAAKRLSADTINITASTSSVTKGETLSDTARNVLAMNPDIIVMRHAVSGAHHYLAKRVSCSVINAGDGAHEHPSQGLLDMLTMRQQFGKLEGLKVAIVGDITHSRVARSDIYGLTRMGANVFLAGPPTMMPPGIERLGNVTVCKDMREAVADADVVMMLRIQLERQGKTLLPTMKEYSRYFGLNQSVLKLAKKDAMVMHPGPINRGVELSSDVADGSQSHILKQVENGVAVRMSMLYHVSGGELPTE.

Carbamoyl phosphate-binding residues include Arg-58 and Thr-59. Lys-86 is an L-aspartate binding site. 3 residues coordinate carbamoyl phosphate: Arg-108, His-136, and Gln-139. Positions 169 and 224 each coordinate L-aspartate. Gly-265 and Pro-266 together coordinate carbamoyl phosphate.

The protein belongs to the aspartate/ornithine carbamoyltransferase superfamily. ATCase family. Heterododecamer (2C3:3R2) of six catalytic PyrB chains organized as two trimers (C3), and six regulatory PyrI chains organized as three dimers (R2).

It catalyses the reaction carbamoyl phosphate + L-aspartate = N-carbamoyl-L-aspartate + phosphate + H(+). The protein operates within pyrimidine metabolism; UMP biosynthesis via de novo pathway; (S)-dihydroorotate from bicarbonate: step 2/3. Its function is as follows. Catalyzes the condensation of carbamoyl phosphate and aspartate to form carbamoyl aspartate and inorganic phosphate, the committed step in the de novo pyrimidine nucleotide biosynthesis pathway. The chain is Aspartate carbamoyltransferase catalytic subunit from Geotalea daltonii (strain DSM 22248 / JCM 15807 / FRC-32) (Geobacter daltonii).